A 317-amino-acid polypeptide reads, in one-letter code: Small ribosomal subunit protein RACK1 (317 aa).

WD repeat units lie at residues glycine 13–lysine 44, glycine 61–aspartate 91, glycine 103–asparagine 133, serine 146–asparagine 178, glycine 190–aspartate 220, aspartate 231–aspartate 260, and alanine 281–glutamine 311.

The protein belongs to the WD repeat G protein beta family. Ribosomal protein RACK1 subfamily.

The protein resides in the cytoplasm. Involved in the recruitment, assembly and/or regulation of a variety of signaling molecules. Interacts with a wide variety of proteins and plays a role in many cellular processes. Required for VANGL2 membrane localization, inhibits Wnt signaling and regulates cellular polarization and oriented cell division during gastrulation. This chain is Small ribosomal subunit protein RACK1 (gnb2l1), found in Danio rerio (Zebrafish).